A 2684-amino-acid chain; its full sequence is Teneurin-1 (2684 aa).

Disordered regions lie at residues 1 to 37 (MFQH…HDYT), 127 to 156 (TTSS…PTYS), and 170 to 204 (GTNQ…KKFD). Over 1–216 (MFQHRTTNAQ…SDTCSRWPSK (216 aa)) the chain is Cytoplasmic. The span at 11-24 (GPPPNRPMPRPPAG) shows a compositional bias: pro residues. Low complexity predominate over residues 127-136 (TTSSTLSPAS). A helical transmembrane segment spans residues 217 to 237 (WNILLAAALLVALFVICILLF). Over 238-2684 (RAPNYVYTQP…VHSWKFRKSE (2447 aa)) the chain is Extracellular. 2 consecutive EGF-like domains span residues 463 to 499 (TGRT…KECE) and 501 to 534 (RHNW…EACE). Cystine bridges form between Cys-467/Cys-476, Cys-472/Cys-487, Cys-489/Cys-498, Cys-505/Cys-516, Cys-510/Cys-522, and Cys-524/Cys-533. Residues 576-614 (PQAQSPPRRGQEPTESSKTRKAQVKPTPTSEKKKESREL) form a disordered region. 2 stretches are compositionally biased toward basic and acidic residues: residues 584 to 593 (RGQEPTESSK) and 605 to 614 (SEKKKESREL). 2 consecutive EGF-like domains span residues 650-684 (DSVD…SNCT) and 716-753 (AIDG…VDCS). 6 disulfides stabilise this stretch: Cys-654–Cys-666, Cys-659–Cys-672, Cys-674–Cys-683, Cys-720–Cys-730, Cys-724–Cys-741, and Cys-743–Cys-752. 4 NHL repeats span residues 1276–1317 (DSCG…IDTT), 1334–1378 (RTCA…VVHD), 1398–1441 (SASA…VRKL), and 1470–1513 (AVSL…VSAR).

This sequence belongs to the tenascin family. Teneurin subfamily. In terms of processing, probably proteolytically processed to generate a N-terminal intracellular domain. Isoform 1 is mainly expressed in organs derived from the mesoderm, including the pharynx, vulva muscles, gonad distal tip cells, intestine and several tail neurons. Isoform 2 is mainly expressed in the organs derived from the ectoderm, including hypodermal cells, head ganglion neurons and tail neurons (at protein level).

The protein localises to the nucleus. The protein resides in the cell membrane. It is found in the membrane. Its function is as follows. Plays a role in the gonadal basement membrane maintenance and/or adhesion early in development. Contributes to the guidance of pharyngeal neurons. The sequence is that of Teneurin-1 (ten-1) from Caenorhabditis elegans.